A 206-amino-acid polypeptide reads, in one-letter code: Protein Nef (206 aa).

Residue Gly2 is the site of N-myristoyl glycine; by host attachment. Ser6 is modified (phosphoserine; by host). An acidic; interacts with host PACS1 and PACS2; stabilizes the interaction of NEF/MHC-I with host AP1M1; necessary for MHC-I internalization region spans residues 62-65; it reads EEEE. The interval 69 to 78 is SH3-binding; interaction with Src family tyrosine kinases; the sequence is PVTPQVPLRP. A PxxP; stabilizes the interaction of NEF/MHC-I with host AP1M1; necessary for MHC-I internalization motif is present at residues 72–75; it reads PQVP. The segment at 108-124 is mediates dimerization, Nef-PTE1 interaction; the sequence is DILDLWIYHTQGYFPDW. Residues 148–180 form a binding to ATP6V1H region; it reads VEPDKIEEANKGENTSLLHPVSLHGMDDPEREV. The short motif at 164–165 is the Dileucine internalization motif; necessary for CD4 internalization element; that stretch reads LL. The Diacidic; necessary for CD4 internalization signature appears at 174 to 175; sequence DD.

It belongs to the lentivirus primate group Nef protein family. Monomer; cytosolic form. Homodimer; membrane bound form. Interacts with Nef associated p21-activated kinase (PAK2); this interaction activates PAK2. Associates with the Nef-MHC-I-AP1 complex; this complex is required for MHC-I internalization. Interacts (via C-terminus) with host PI3-kinase. Interacts with host PACS1; this interaction seems to be weak. Interacts with host PACS2. Interacts with host LCK and MAPK3; these interactions inhibit the kinase activity of the latter. Interacts with host ATP6V1H; this interaction may play a role in CD4 endocytosis. Associates with the CD4-Nef-AP2 complex; this complex is required for CD4 internalization. Interacts with host AP2 subunit alpha and AP2 subunit sigma2. Interacts with TCR-zeta chain; this interaction up-regulates the Fas ligand (FasL) surface expression. Interacts with host HCK, LYN, and SRC; these interactions activate the Src family kinases. Interacts with MAP3K5; this interaction inhibits the Fas and TNFR-mediated death signals. Interacts with beta-COP and PTE1. Interacts with human RACK1; this increases Nef phosphorylation by PKC. Interacts with TP53; this interaction decreases the half-life of TP53, protecting the infected cell against p53-mediated apoptosis. Phosphorylated on serine residues, probably by host PKCdelta and theta. In terms of processing, myristoylated. Post-translationally, the virion-associated Nef proteins are cleaved by the viral protease to release the soluble C-terminal core protein. Nef is probably cleaved concomitantly with viral structural proteins on maturation of virus particles.

It localises to the host cell membrane. Its subcellular location is the virion. The protein resides in the secreted. The protein localises to the host Golgi apparatus membrane. In terms of biological role, factor of infectivity and pathogenicity, required for optimal virus replication. Alters numerous pathways of T-lymphocyte function and down-regulates immunity surface molecules in order to evade host defense and increase viral infectivity. Alters the functionality of other immunity cells, like dendritic cells, monocytes/macrophages and NK cells. Its function is as follows. In infected CD4(+) T-lymphocytes, down-regulates the surface MHC-I, mature MHC-II, CD4, CD28, CCR5 and CXCR4 molecules. Mediates internalization and degradation of host CD4 through the interaction of with the cytoplasmic tail of CD4, the recruitment of AP-2 (clathrin adapter protein complex 2), internalization through clathrin coated pits, and subsequent transport to endosomes and lysosomes for degradation. Diverts host MHC-I molecules to the trans-Golgi network-associated endosomal compartments by an endocytic pathway to finally target them for degradation. MHC-I down-regulation may involve AP-1 (clathrin adapter protein complex 1) or possibly Src family kinase-ZAP70/Syk-PI3K cascade recruited by PACS2. In consequence infected cells are masked for immune recognition by cytotoxic T-lymphocytes. Decreasing the number of immune receptors also prevents reinfection by more HIV particles (superinfection). Down-regulates host SERINC3 and SERINC5 thereby excluding these proteins from the viral particles. Virion infectivity is drastically higher when SERINC3 or SERINC5 are excluded from the viral envelope, because these host antiviral proteins impair the membrane fusion event necessary for subsequent virion penetration. Functionally, bypasses host T-cell signaling by inducing a transcriptional program nearly identical to that of anti-CD3 cell activation. Interaction with TCR-zeta chain up-regulates the Fas ligand (FasL). Increasing surface FasL molecules and decreasing surface MHC-I molecules on infected CD4(+) cells send attacking cytotoxic CD8+ T-lymphocytes into apoptosis. Plays a role in optimizing the host cell environment for viral replication without causing cell death by apoptosis. Protects the infected cells from apoptosis in order to keep them alive until the next virus generation is ready to strike. Inhibits the Fas and TNFR-mediated death signals by blocking MAP3K5/ASK1. Decreases the half-life of TP53, protecting the infected cell against p53-mediated apoptosis. Inhibits the apoptotic signals regulated by the Bcl-2 family proteins through the formation of a Nef/PI3-kinase/PAK2 complex that leads to activation of PAK2 and induces phosphorylation of Bad. In terms of biological role, extracellular Nef protein targets CD4(+) T-lymphocytes for apoptosis by interacting with CXCR4 surface receptors. This Human immunodeficiency virus type 1 group M subtype B (isolate HXB2) (HIV-1) protein is Protein Nef.